A 362-amino-acid polypeptide reads, in one-letter code: MIDKLEDVERRFERLTADLSNPDVLADSARLQKVSKERAGLEKLVEAFRTYRKVLADLSEVEAWLGSSDADEKAFARESLPGLKEQRDELEASLKILLLPKDPNDEKNVILEIRAGAGGDEAALFAEEVMQMYLRYADRRGWKADILDMSPGNAGGVKDATVTLSGDAVFSSMKYESGVHRVQRVPATETQGRIHTSTITVSVMPEAEDVDVQVNPADIEMQVMRSTGSGGQSVNTTDSAVRLIHHPTGIVVKCQQEKSQLKNRTMAMRMLRAKLYDIEQERIRNERDSARRAQVGTGDRSEKIRTYNFPQDRLTDHRIGLTVHNLPGVMAGDVEDVITACRTFYQAEALKAQTAGGPKPSA.

Residue Gln-232 is modified to N5-methylglutamine.

The protein belongs to the prokaryotic/mitochondrial release factor family. Post-translationally, methylated by PrmC. Methylation increases the termination efficiency of RF1.

Its subcellular location is the cytoplasm. Functionally, peptide chain release factor 1 directs the termination of translation in response to the peptide chain termination codons UAG and UAA. This is Peptide chain release factor 1 from Myxococcus xanthus.